We begin with the raw amino-acid sequence, 58 residues long: Sec-independent protein translocase protein TatA (58 aa).

A helical transmembrane segment spans residues Met-1–Phe-21.

The protein belongs to the TatA/E family. As to quaternary structure, forms a complex with TatC.

It is found in the cell membrane. Part of the twin-arginine translocation (Tat) system that transports large folded proteins containing a characteristic twin-arginine motif in their signal peptide across membranes. TatA could form the protein-conducting channel of the Tat system. The chain is Sec-independent protein translocase protein TatA from Bacillus cytotoxicus (strain DSM 22905 / CIP 110041 / 391-98 / NVH 391-98).